Reading from the N-terminus, the 432-residue chain is Methylenetetrahydrofolate--tRNA-(uracil-5-)-methyltransferase TrmFO (432 aa).

Residue 7–12 coordinates FAD; the sequence is GGGLAG.

The protein belongs to the MnmG family. TrmFO subfamily. The cofactor is FAD.

It localises to the cytoplasm. It catalyses the reaction uridine(54) in tRNA + (6R)-5,10-methylene-5,6,7,8-tetrahydrofolate + NADH + H(+) = 5-methyluridine(54) in tRNA + (6S)-5,6,7,8-tetrahydrofolate + NAD(+). The enzyme catalyses uridine(54) in tRNA + (6R)-5,10-methylene-5,6,7,8-tetrahydrofolate + NADPH + H(+) = 5-methyluridine(54) in tRNA + (6S)-5,6,7,8-tetrahydrofolate + NADP(+). Functionally, catalyzes the folate-dependent formation of 5-methyl-uridine at position 54 (M-5-U54) in all tRNAs. This is Methylenetetrahydrofolate--tRNA-(uracil-5-)-methyltransferase TrmFO from Coprothermobacter proteolyticus (strain ATCC 35245 / DSM 5265 / OCM 4 / BT).